Consider the following 610-residue polypeptide: tRNA uridine 5-carboxymethylaminomethyl modification enzyme MnmG (610 aa).

14–19 (GAGHAG) provides a ligand contact to FAD. Position 274 to 288 (274 to 288 (GPRYCPSIEDKIVKF)) interacts with NAD(+).

Belongs to the MnmG family. As to quaternary structure, homodimer. Heterotetramer of two MnmE and two MnmG subunits. The cofactor is FAD.

The protein resides in the cytoplasm. NAD-binding protein involved in the addition of a carboxymethylaminomethyl (cmnm) group at the wobble position (U34) of certain tRNAs, forming tRNA-cmnm(5)s(2)U34. In Chlamydia trachomatis serovar D (strain ATCC VR-885 / DSM 19411 / UW-3/Cx), this protein is tRNA uridine 5-carboxymethylaminomethyl modification enzyme MnmG.